The sequence spans 493 residues: Putative MgpC-like protein MPN_414 (493 aa).

Positions 1-14 (MKPTSLPKNFTNNP) are enriched in polar residues. Disordered stretches follow at residues 1-92 (MKPT…GHNS) and 441-493 (KSAR…SGNH). 2 stretches are compositionally biased toward basic and acidic residues: residues 25–34 (DNGRAYRKLN) and 44–56 (DSTK…DKDG). Polar residues-rich tracts occupy residues 72-92 (VSST…GHNS) and 445-472 (ENAQ…SPCR). Residues 482–493 (RVTEEERSSGNH) show a composition bias toward basic and acidic residues.

This sequence belongs to the MgpC family.

The protein is Putative MgpC-like protein MPN_414 of Mycoplasma pneumoniae (strain ATCC 29342 / M129 / Subtype 1) (Mycoplasmoides pneumoniae).